A 199-amino-acid chain; its full sequence is MAWPCISRLCCLARRWNQLDRSDVAVPLTLHGYSDLDSEEPGTGGAASRRGQPPAGARDSGRDVPLTQYQRDFGLWTTPAGPKDPPPGRGPGAGGRRGKSSAQSSAPPAPGARGVYVLPIGDADAAAAVTTSYRQEFQAWTGVKPSRSTKTKPARVITTHTSGWDSSPGAGFQVPEVRKKFTPNPSAIFQASAPRILNV.

S-palmitoyl cysteine attachment occurs at residues cysteine 5, cysteine 10, and cysteine 11. Residues 33–110 (YSDLDSEEPG…SAQSSAPPAP (78 aa)) form a disordered region. Serine 38 is modified (phosphoserine). 2 mn regions span residues 130–143 (TTSY…WTGV) and 165–177 (DSSP…VPEV). Serine 167 bears the Phosphoserine mark.

It belongs to the STOP family. Interacts with calmodulin. Palmitoylated. Palmitoylation enhances association with microtubules.

Its subcellular location is the golgi apparatus. It localises to the cytoplasm. The protein localises to the cytoskeleton. May have microtubule-stabilizing activity. The chain is MAP6 domain-containing protein 1 (MAP6D1) from Homo sapiens (Human).